The sequence spans 125 residues: Somatostatin-2 (125 aa).

The N-terminal stretch at 1–24 (MQCIRCPAILALLALVLCGPSVSS) is a signal peptide. Gln-25 carries the pyrrolidone carboxylic acid modification. A propeptide spanning residues 25 to 97 (QLDREQSDNQ…ATGGRMNLER (73 aa)) is cleaved from the precursor. Residues 82-107 (AEDASMATGGRMNLERSVDSTNNLPP) form a disordered region. Cys-114 and Cys-125 form a disulfide bridge. Residue Lys-120 is modified to 5-hydroxylysine.

This sequence belongs to the somatostatin family.

The protein localises to the secreted. Functionally, somatostatin inhibits the release of somatotropin. The protein is Somatostatin-2 (sst2) of Lophius americanus (American angler).